The primary structure comprises 275 residues: Collectin-10 (275 aa).

A signal peptide spans 1-25; that stretch reads MKYGKLWPIGVSVLGVIALHVRVLS. N-linked (GlcNAc...) asparagine glycosylation is present at Asn30. Residues 39–76 are disordered; it reads THTILPGPKGDDGEAGDTGVLGKLGKDGPKGQKGNKGI. In terms of domain architecture, Collagen-like spans 51 to 110; sequence GEAGDTGVLGKLGKDGPKGQKGNKGIIGDSGDLGLIGKIGPIGSKGDKGHKGLPGLPGGK. The 117-residue stretch at 153–269 folds into the C-type lectin domain; sequence TDEKYYYIVR…CSLTIYFVCE (117 aa). Disulfide bonds link Cys174–Cys268 and Cys246–Cys260.

The protein belongs to the COLEC10/COLEC11 family.

It is found in the secreted. Lectin that binds to various sugars: galactose &gt; mannose = fucose &gt; N-acetylglucosamine &gt; N-acetylgalactosamine. This is Collectin-10 (colec10) from Xenopus tropicalis (Western clawed frog).